A 251-amino-acid polypeptide reads, in one-letter code: 3-deoxy-manno-octulosonate cytidylyltransferase (251 aa).

Belongs to the KdsB family.

The protein localises to the cytoplasm. It carries out the reaction 3-deoxy-alpha-D-manno-oct-2-ulosonate + CTP = CMP-3-deoxy-beta-D-manno-octulosonate + diphosphate. The protein operates within nucleotide-sugar biosynthesis; CMP-3-deoxy-D-manno-octulosonate biosynthesis; CMP-3-deoxy-D-manno-octulosonate from 3-deoxy-D-manno-octulosonate and CTP: step 1/1. Its pathway is bacterial outer membrane biogenesis; lipopolysaccharide biosynthesis. In terms of biological role, activates KDO (a required 8-carbon sugar) for incorporation into bacterial lipopolysaccharide in Gram-negative bacteria. The polypeptide is 3-deoxy-manno-octulosonate cytidylyltransferase (Alcanivorax borkumensis (strain ATCC 700651 / DSM 11573 / NCIMB 13689 / SK2)).